Here is a 190-residue protein sequence, read N- to C-terminus: Segregation and condensation protein B (190 aa).

It belongs to the ScpB family. Homodimer. Homodimerization may be required to stabilize the binding of ScpA to the Smc head domains. Component of a cohesin-like complex composed of ScpA, ScpB and the Smc homodimer, in which ScpA and ScpB bind to the head domain of Smc. The presence of the three proteins is required for the association of the complex with DNA.

The protein resides in the cytoplasm. Participates in chromosomal partition during cell division. May act via the formation of a condensin-like complex containing Smc and ScpA that pull DNA away from mid-cell into both cell halves. In Bacillus cereus (strain AH187), this protein is Segregation and condensation protein B.